We begin with the raw amino-acid sequence, 433 residues long: Cell division protein FtsZ homolog 1, chloroplastic (433 aa).

The N-terminal 66 residues, Met1–Cys66, are a transit peptide targeting the chloroplast. Residue Ser67 is modified to N-acetylserine. Residues Gly83–Asn87, Gly170–Gly172, Glu201, Arg205, and Asp249 contribute to the GTP site. The interval Gly399–Phe433 is disordered. The segment covering Gln414 to Phe433 has biased composition (low complexity).

The protein belongs to the FtsZ family. In terms of assembly, aggregates to form a contractile ring-like structure; contraction of the ring was accompanied by an increase in the filament turnover rate. This aggregation is regulated in midchloroplast stroma by MIND1 (repressor) and MINE1 (promoter). Self-interacts and binds to FTSZ2-1 in heteromers to form two morphologically distinct types of filaments, termed type-I (smooth filaments) and type-II (rough filaments), in a GTP-dependent manner. Interacts with ARC3. Part of a complex made of ARC3, ARC6, FTSZ1 and FTSZ2. As to expression, in pollen grain, restricted to plastids of vegetative cells. Also present in pollen tubes plastids.

The protein localises to the plastid. The protein resides in the chloroplast stroma. It is found in the chloroplast thylakoid membrane. In terms of biological role, exhibits GTPase activity. Component of the plastid division machinery that forms a contractile ring at the division site. Required for plastid division in a dose-dependent manner. Involved in epidermal plastids division in a MINE1-dependent manner. Involved in blue light-induced chloroplast movements. May regulate thylakoid development. In the vegetative shoot apex, at the shoot apical meristem (SAM), where the proplastid-to-chloroplast transition takes place, contributes equally with FTSZ2-1 in the L2 layer to plastid division. The polypeptide is Cell division protein FtsZ homolog 1, chloroplastic (Arabidopsis thaliana (Mouse-ear cress)).